The chain runs to 256 residues: uncharacterized protein (256 aa).

7 helical membrane passes run 32–52 (ILASIFIGFGITAASKTGSYF), 59–79 (FAFPAAAVTFGAAILMIAYGG), 112–132 (YAGNLIGAILFAILISATGLF), 156–176 (LFFRGMLCNWLVCLAFFIPMS), 184–204 (LFTMMLFVFCFFISGFEHSIA), 207–227 (CTFAISLLIEHPDTVTLMGAV), and 230–250 (LIPVTLGNLTAGIVMMGWMYY).

This sequence belongs to the FNT transporter (TC 1.A.16) family.

It localises to the cell membrane. This is an uncharacterized protein from Bacillus subtilis (strain 168).